We begin with the raw amino-acid sequence, 57 residues long: uncharacterized protein (57 aa).

This is an uncharacterized protein from Archaeoglobus fulgidus (strain ATCC 49558 / DSM 4304 / JCM 9628 / NBRC 100126 / VC-16).